We begin with the raw amino-acid sequence, 1409 residues long: Mediator of RNA polymerase II transcription subunit 23 (1409 aa).

Residues 1359–1409 form a disordered region; sequence ASAAGQGPAQGGPQSQQPQTTGQAGGQPSVPQQQQQTQQQQPQQQQQVQQQ.

It belongs to the Mediator complex subunit 23 family. As to quaternary structure, component of the Mediator complex.

The protein resides in the nucleus. Its function is as follows. Component of the Mediator complex, a coactivator involved in the regulated transcription of nearly all RNA polymerase II-dependent genes. Mediator functions as a bridge to convey information from gene-specific regulatory proteins to the basal RNA polymerase II transcription machinery. Mediator is recruited to promoters by direct interactions with regulatory proteins and serves as a scaffold for the assembly of a functional preinitiation complex with RNA polymerase II and the general transcription factors. The polypeptide is Mediator of RNA polymerase II transcription subunit 23 (MED23) (Aedes aegypti (Yellowfever mosquito)).